Reading from the N-terminus, the 77-residue chain is Small ribosomal subunit protein uS17 (77 aa).

The protein belongs to the universal ribosomal protein uS17 family. In terms of assembly, part of the 30S ribosomal subunit.

In terms of biological role, one of the primary rRNA binding proteins, it binds specifically to the 5'-end of 16S ribosomal RNA. In Anaplasma marginale (strain St. Maries), this protein is Small ribosomal subunit protein uS17.